The chain runs to 729 residues: Oligopeptide transporter 4 (729 aa).

N-acetylalanine is present on Ala2. The residue at position 8 (Ser8) is a Phosphoserine. 16 consecutive transmembrane segments (helical) span residues 37 to 57 (MWFLGLISCSLLSFLNQFFSY), 61 to 81 (PLVITQITVQVATLPIGHFLA), 123 to 143 (AFGSGSAYAVGIITIIKAFYG), 148 to 168 (FIAGWLLIITTQVLGYGWAGL), 177 to 194 (AHMWWPSTLVQVSLFRAL), 207 to 227 (FFVIALVCSFGWYIVPGYLFT), 256 to 276 (GLGAFTLDWTAVASFLFSPLI), 279 to 299 (FFAIANVFIGYVLLIYFVLPL), 352 to 372 (LSMFFALTYGLGFATIASTLT), 410 to 430 (WWFYSMLAATLLISLALCVFL), 438 to 458 (WWGLVFASAMAFVFTLPISII), 522 to 542 (FLVQFIGTILAGTINITVAWW), 592 to 612 (YAAMNWFFLGGALGPVIVWSL), 621 to 637 (WIPLVNLPVLLGATAMM), 640 to 660 (ATAVNYNSWILVGTIFNLFVF), and 673 to 693 (VLSAAMDAGVAFMAVLLYFSV).

It belongs to the oligopeptide OPT transporter (TC 2.A.67.1) family. In terms of tissue distribution, expressed in flowers, leaves, roots, and stems.

The protein localises to the membrane. Its function is as follows. Involved in the translocation of tetra- and pentapeptides across the cellular membrane in an energy-dependent manner. The chain is Oligopeptide transporter 4 (OPT4) from Arabidopsis thaliana (Mouse-ear cress).